The following is a 416-amino-acid chain: uncharacterized protein (416 aa).

[4Fe-4S] cluster-binding residues include C63, C75, C78, and C152. 4 residues coordinate S-adenosyl-L-methionine: Q253, F280, E300, and D348. Catalysis depends on C374, which acts as the Nucleophile.

Belongs to the class I-like SAM-binding methyltransferase superfamily. RNA M5U methyltransferase family.

This is an uncharacterized protein from Agrobacterium fabrum (strain C58 / ATCC 33970) (Agrobacterium tumefaciens (strain C58)).